Here is a 91-residue protein sequence, read N- to C-terminus: Small ribosomal subunit protein bS20 (91 aa).

Positions 1-21 (MPLHKSAEKRLRQSARRNERN) are enriched in basic and acidic residues. 2 disordered regions span residues 1–25 (MPLH…RARK) and 71–91 (NKAS…AQKD).

It belongs to the bacterial ribosomal protein bS20 family.

Its function is as follows. Binds directly to 16S ribosomal RNA. The protein is Small ribosomal subunit protein bS20 of Prosthecochloris aestuarii (strain DSM 271 / SK 413).